Consider the following 498-residue polypeptide: O-methyltransferase OME1 (498 aa).

Residues 1–19 show a composition bias toward polar residues; sequence MSTMALHRTASTKSDTTMA. 2 disordered regions span residues 1 to 23 and 42 to 83; these read MSTM…CPNG and HRAE…QPEY. A compositionally biased stretch (low complexity) spans 50–65; it reads SSTSSVSTTPTSPSFS. Asp358 contacts S-adenosyl-L-methionine. The Proton acceptor role is filled by His406.

This sequence belongs to the class I-like SAM-binding methyltransferase superfamily. Cation-independent O-methyltransferase family.

It participates in secondary metabolite biosynthesis. O-methyltransferase; part of the gene cluster that mediates the biosynthesis of a tyrosine-derived cytochalasan acting as a fungal signal recognized by resistant rice plants and leads to avirulence in Pi33 resistant rice cultivars. The first step in the pathway is catalyzed by the hybrid PKS-NRPS ACE1, assisted by the enoyl reductase RAP1, that are responsible for fusion of the tyrosine precursor and the polyketide backbone. The polyketide synthase module (PKS) of ACE1 is responsible for the synthesis of the polyketide backbone and the downstream nonribosomal peptide synthetase (NRPS) amidates the carboxyl end of the polyketide with the tyrosine precursor. Because ACE1 lacks a designated enoylreductase (ER) domain, the required activity is provided the enoyl reductase RAP1. Reduction by the hydrolyase ORFZ, followed by dehydration and intra-molecular Diels-Alder cyclization by the Diels-Alderase ORF3 then yield the required isoindolone-fused macrocycle. A number of oxidative steps catalyzed by the tailoring enzymes identified within the cluster, including cytochrome P450 monooxygenases CYP1 to CYP4, the FAD-linked oxidoreductase OXR2 and the short-chain dehydrogenase/reductase OXR1, are further required to afford the final cytochalasans that confer avirulence and which have still to be identified. The monooxygenase CYP1 has been shown to be a site-selective C-18 hydroxylase whereas the function of CYP3 is the site-selective epoxidation of the C-6/C-7 olefin that is present in some intermediate compounds. Finally, SYN2 and RAP2 are not required for avirulence in Pi33 resistant rice cultivars. This chain is O-methyltransferase OME1, found in Pyricularia oryzae (strain 70-15 / ATCC MYA-4617 / FGSC 8958) (Rice blast fungus).